The sequence spans 346 residues: Uroporphyrinogen decarboxylase (346 aa).

Substrate is bound by residues Arg-26–Arg-30, Asp-76, Tyr-153, Ser-208, and His-323.

The protein belongs to the uroporphyrinogen decarboxylase family. Homodimer.

It localises to the cytoplasm. The catalysed reaction is uroporphyrinogen III + 4 H(+) = coproporphyrinogen III + 4 CO2. It functions in the pathway porphyrin-containing compound metabolism; protoporphyrin-IX biosynthesis; coproporphyrinogen-III from 5-aminolevulinate: step 4/4. Functionally, catalyzes the decarboxylation of four acetate groups of uroporphyrinogen-III to yield coproporphyrinogen-III. The sequence is that of Uroporphyrinogen decarboxylase from Prochlorococcus marinus (strain AS9601).